Here is a 75-residue protein sequence, read N- to C-terminus: Sec-independent protein translocase protein TatA (75 aa).

The helical transmembrane segment at 1–21 threads the bilayer; sequence MGSMSIWHWIVVLAVVLLLFG. Residues 43–75 form a disordered region; that stretch reads MAEDDDAPAKPAEPPRAVPHQATPAPESEKKAV.

Belongs to the TatA/E family. The Tat system comprises two distinct complexes: a TatABC complex, containing multiple copies of TatA, TatB and TatC subunits, and a separate TatA complex, containing only TatA subunits. Substrates initially bind to the TatABC complex, which probably triggers association of the separate TatA complex to form the active translocon.

Its subcellular location is the cell inner membrane. In terms of biological role, part of the twin-arginine translocation (Tat) system that transports large folded proteins containing a characteristic twin-arginine motif in their signal peptide across membranes. TatA could form the protein-conducting channel of the Tat system. The chain is Sec-independent protein translocase protein TatA from Azorhizobium caulinodans (strain ATCC 43989 / DSM 5975 / JCM 20966 / LMG 6465 / NBRC 14845 / NCIMB 13405 / ORS 571).